The sequence spans 493 residues: Dipeptide permease D (493 aa).

Residues 1–13 (MNKHASQPRAIYY) are Cytoplasmic-facing. Residues 14 to 34 (VVALQIWEYFSFYGMRALLIL) form a helical membrane-spanning segment. Residues 35 to 48 (YLTNQLKYNDTHAY) lie on the Periplasmic side of the membrane. The chain crosses the membrane as a helical span at residues 49 to 69 (ELFSAYCSLVYVTPILGGFLA). At 70–77 (DKVLGNRM) the chain is on the cytoplasmic side. Residues 78-98 (AVMLGALLMAIGHVVLGASEI) traverse the membrane as a helical segment. Over 99 to 100 (HP) the chain is Periplasmic. Residues 101–121 (SFLYLSLAIIVCGYGLFKSNV) form a helical membrane-spanning segment. The Cytoplasmic segment spans residues 122–137 (SCLLGELYEPTDPRRD). The chain crosses the membrane as a helical span at residues 138-158 (GGFSLMYAAGNVGSIIAPIAC). The Periplasmic portion of the chain corresponds to 159–166 (GYAQEEYS). A helical membrane pass occupies residues 167 to 187 (WAMGFGLAAVGMIAGLVIFLC). Residues 188–211 (GNRHFTHTRGVNKKVLRATNFLLP) lie on the Cytoplasmic side of the membrane. A helical membrane pass occupies residues 212–232 (NWGWLLVLLVATPALITILFW). Residues 233 to 234 (KE) are Periplasmic-facing. The chain crosses the membrane as a helical span at residues 235–255 (WSVYALIVATIIGLGVLAKIY). Topologically, residues 256–266 (RKAENQKQRKE) are cytoplasmic. Residues 267-287 (LGLIVTLTFFSMLFWAFAQQG) traverse the membrane as a helical segment. Topologically, residues 288–311 (GSSISLYIDRFVNRDMFGYTVPTA) are periplasmic. Residues 312-332 (MFQSINAFAVMLCGVFLAWVV) traverse the membrane as a helical segment. The Cytoplasmic portion of the chain corresponds to 333 to 343 (KESVAGNRTVR). Residues 344–364 (IWGKFALGLGLMSAGFCILTL) traverse the membrane as a helical segment. Over 365-378 (SARWSAMYGHSSLP) the chain is Periplasmic. The helical transmembrane segment at 379–399 (LMVLGLAVMGFAELFIDPVAM) threads the bilayer. Topologically, residues 400–412 (SQITRIEIPGVTG) are cytoplasmic. A helical transmembrane segment spans residues 413 to 433 (VLTGIYMLLSGAIANYLAGVI). The Periplasmic segment spans residues 434 to 461 (ADQTSQASFDASGAINYSINAYIEVFDQ). The chain crosses the membrane as a helical span at residues 462-482 (ITWGALACVGLVLMIWLYQAL). Residues 483-493 (KFRNRALALES) lie on the Cytoplasmic side of the membrane.

This sequence belongs to the major facilitator superfamily. Proton-dependent oligopeptide transporter (POT/PTR) (TC 2.A.17) family. DtpD subfamily.

Its subcellular location is the cell inner membrane. Functionally, probable proton-dependent permease that transports dipeptides. In Escherichia coli (strain K12), this protein is Dipeptide permease D (dtpD).